The following is a 396-amino-acid chain: Elongation factor Tu 2 (396 aa).

In terms of domain architecture, tr-type G spans 10–206 (KPHVNVGTIG…ALDTYIPTPE (197 aa)). Positions 19 to 26 (GHVDHGKT) are G1. Position 19-26 (19-26 (GHVDHGKT)) interacts with GTP. T26 is a binding site for Mg(2+). The tract at residues 60–64 (GITIN) is G2. The G3 stretch occupies residues 81 to 84 (DCPG). Residues 81-85 (DCPGH) and 136-139 (NKAD) each bind GTP. The interval 136 to 139 (NKAD) is G4. Positions 174–176 (SAK) are G5.

Belongs to the TRAFAC class translation factor GTPase superfamily. Classic translation factor GTPase family. EF-Tu/EF-1A subfamily. In terms of assembly, monomer.

The protein resides in the cytoplasm. The enzyme catalyses GTP + H2O = GDP + phosphate + H(+). Functionally, GTP hydrolase that promotes the GTP-dependent binding of aminoacyl-tRNA to the A-site of ribosomes during protein biosynthesis. The protein is Elongation factor Tu 2 of Methylobacillus flagellatus (strain ATCC 51484 / DSM 6875 / VKM B-1610 / KT).